The chain runs to 249 residues: GTP cyclohydrolase 1 type 2 homolog (249 aa).

Positions 64, 65, 102, 217, and 221 each coordinate a divalent metal cation.

The protein belongs to the GTP cyclohydrolase I type 2/NIF3 family. As to quaternary structure, homohexamer.

The sequence is that of GTP cyclohydrolase 1 type 2 homolog from Neisseria meningitidis serogroup B (strain ATCC BAA-335 / MC58).